Reading from the N-terminus, the 154-residue chain is Nuclear cap-binding protein subunit 2 (154 aa).

Residues Tyr-10, Tyr-33, 102–106 (RCDWD), 113–117 (RQYGR), and 123–124 (QV) contribute to the mRNA site. Residues 30–108 (STLYMGNLSF…RIIRCDWDAG (79 aa)) form the RRM domain.

Belongs to the RRM NCBP2 family. As to quaternary structure, component of the nuclear cap-binding complex (CBC), a heterodimer composed of Cbp80 and Cbp20 that interacts with m7GpppG-capped RNA.

It localises to the nucleus. Component of the cap-binding complex (CBC), which binds co-transcriptionally to the 5' cap of pre-mRNAs and is involved in various processes such as pre-mRNA splicing and RNA-mediated gene silencing (RNAi). The CBC complex is involved in miRNA-mediated RNA interference and is required for primary microRNAs (miRNAs) processing. Also involved in innate immunity via the short interfering RNAs (siRNAs) processing machinery by restricting the viral RNA production. In the CBC complex, Cbp20 recognizes and binds capped RNAs (m7GpppG-capped RNA) but requires Cbp80 to stabilize the movement of its N-terminal loop and lock the CBC into a high affinity cap-binding state with the cap structure. The chain is Nuclear cap-binding protein subunit 2 from Bombyx mori (Silk moth).